Consider the following 137-residue polypeptide: Protein Flattop homolog (137 aa).

This sequence belongs to the Flattop family.

Its subcellular location is the cytoplasm. The protein resides in the cytoskeleton. It localises to the flagellum axoneme. Microtubule inner protein (MIP) part of the dynein-decorated doublet microtubules (DMTs) in cilia axoneme. Acts as a regulator of cilium basal body docking and positioning in mono- and multiciliated cells. Regulates basal body docking and cilia formation in multiciliated lung cells. Regulates kinocilium positioning and stereocilia bundle morphogenesis in the inner ear. The chain is Protein Flattop homolog from Chlamydomonas reinhardtii (Chlamydomonas smithii).